Here is an 88-residue protein sequence, read N- to C-terminus: Small ribosomal subunit protein uS17 (88 aa).

It belongs to the universal ribosomal protein uS17 family. Part of the 30S ribosomal subunit.

Its function is as follows. One of the primary rRNA binding proteins, it binds specifically to the 5'-end of 16S ribosomal RNA. This Teredinibacter turnerae (strain ATCC 39867 / T7901) protein is Small ribosomal subunit protein uS17.